A 1865-amino-acid chain; its full sequence is Dedicator of cytokinesis protein 1 (1865 aa).

The SH3 domain occupies 9–70; that stretch reads REEKYGVAFY…PASYIHLKEA (62 aa). The 185-residue stretch at 425-609 folds into the C2 DOCK-type domain; that stretch reads RNDIYVTLVQ…DSFQISTLVC (185 aa). A DOCKER domain is found at 1207 to 1617; it reads YKEIEREEMY…VEKQYGVRTM (411 aa). The segment at 1613–1723 is disordered; sequence GVRTMPSGLD…FKPADSSLQQ (111 aa). The span at 1639–1664 shows a compositional bias: low complexity; the sequence is PSSSRPLSVASVSSFSSDSTPSRPGS. Basic and acidic residues predominate over residues 1680-1694; the sequence is RSQDKLDKDDPDKEK. Residue S1681 is modified to Phosphoserine. The tract at residues 1687–1695 is phosphoinositide-binding; it reads KDDPDKEKK. Positions 1695–1704 are enriched in basic residues; the sequence is KDKKKEKRNS. Basic and acidic residues predominate over residues 1705 to 1716; the sequence is KHQEIFDKEFKP. Residues S1743, S1756, S1761, and S1764 each carry the phosphoserine modification. Disordered stretches follow at residues 1753–1778 and 1801–1865; these read RRFS…AKLS and PLPL…GIVQ. Low complexity predominate over residues 1756-1766; sequence SVSPASPSSQQ. Residues T1767 and T1772 each carry the phosphothreonine modification. An interaction with NCK2 second and third SH3 domain (minor) region spans residues 1793-1819; the sequence is MDVADVPPPLPLKGNMADYGNLMENQD. The SH3-binding; interaction with CRK signature appears at 1799 to 1805; that stretch reads PPPLPLK. The interaction with NCK2 third SH3 domain (major) stretch occupies residues 1820–1836; sequence MMVSPTSPPPPPPQRQQ. The span at 1825 to 1851 shows a compositional bias: pro residues; that stretch reads TSPPPPPPQRQQPPPLPSKTPPPPPPK. Residues 1837-1852 are interaction with NCK2 (minor); that stretch reads PPPLPSKTPPPPPPKT. The SH3-binding; interaction with CRK signature appears at 1838-1843; it reads PPLPSK. The residue at position 1858 (S1858) is a Phosphoserine.

This sequence belongs to the DOCK family. As to quaternary structure, interacts with the SH3 domains of CRK and NCK2 via multiple sites. Interacts with nucleotide-free RAC1 via its DOCKER domain. Interacts with ELMO1, ELMO2 and probably ELMO3 via its SH3 domain. Interacts with RAC1. Interacts with ELMO1 and ADGRB1. Identified in a complex with AUTS2 and ELMO2.

The protein resides in the cytoplasm. Its subcellular location is the membrane. Its function is as follows. Involved in cytoskeletal rearrangements required for phagocytosis of apoptotic cells and cell motility. Along with DOCK1, mediates CRK/CRKL regulation of epithelial and endothelial cell spreading and migration on type IV collagen. Functions as a guanine nucleotide exchange factor (GEF), which activates Rac Rho small GTPases by exchanging bound GDP for free GTP. Its GEF activity may be enhanced by ELMO1. The protein is Dedicator of cytokinesis protein 1 (Dock1) of Mus musculus (Mouse).